A 286-amino-acid polypeptide reads, in one-letter code: MSYVITDETKLTGIIGRPIKQSFSPKIHNGAFQYLNLNYIYIPFEVVQQDLSKTVEAMKVLKFRGFNVTMPHKREVMNYLDEVSENAKIIGAVNTVVNQNGKLVGHNTDGKGYVQSLEDEGIYVKEKTFVIAGAGGAARSVAVQLALDGAKKITILNRTIDKAHDIAQLIGMSIPNVHIEINCLENKTLAKAVEEADVLINTTSLGMYSMEEESIIGEEKVLPSNLVVSDLIYNPAKTKLLQQAESRGCKTINGLGMLIGQAAIAFELWTEVAMPIDYIKKTLFTR.

Shikimate-binding positions include S22–S24 and T69. K73 functions as the Proton acceptor in the catalytic mechanism. E85 serves as a coordination point for NADP(+). N94 and D109 together coordinate shikimate. NADP(+) contacts are provided by residues G133–A137, N157–K162, and L231. Residue Y233 coordinates shikimate. G254 contributes to the NADP(+) binding site.

Belongs to the shikimate dehydrogenase family. Homodimer.

The enzyme catalyses shikimate + NADP(+) = 3-dehydroshikimate + NADPH + H(+). It functions in the pathway metabolic intermediate biosynthesis; chorismate biosynthesis; chorismate from D-erythrose 4-phosphate and phosphoenolpyruvate: step 4/7. In terms of biological role, involved in the biosynthesis of the chorismate, which leads to the biosynthesis of aromatic amino acids. Catalyzes the reversible NADPH linked reduction of 3-dehydroshikimate (DHSA) to yield shikimate (SA). This is Shikimate dehydrogenase (NADP(+)) from Alkaliphilus oremlandii (strain OhILAs) (Clostridium oremlandii (strain OhILAs)).